Consider the following 616-residue polypeptide: Replication protein A 70 kDa DNA-binding subunit (616 aa).

Met1 is subject to N-acetylmethionine. Glycyl lysine isopeptide (Lys-Gly) (interchain with G-Cter in ubiquitin) cross-links involve residues Lys22 and Lys88. The segment at 121 to 155 (GLGQPQVAPPAPAASPAASSRPQPQNGTSGAGSTV) is disordered. Low complexity predominate over residues 134–145 (ASPAASSRPQPQ). Polar residues predominate over residues 146-155 (NGTSGAGSTV). Lys163 and Lys167 each carry N6-acetyllysine; alternate. Glycyl lysine isopeptide (Lys-Gly) (interchain with G-Cter in ubiquitin); alternate cross-links involve residues Lys163 and Lys167. Position 180 is a phosphothreonine (Thr180). A Glycyl lysine isopeptide (Lys-Gly) (interchain with G-Cter in ubiquitin) cross-link involves residue Lys183. A Phosphothreonine modification is found at Thr191. The segment at residues 197–281 (WTICARVTNK…VKNDYEMTFN (85 aa)) is a DNA-binding region (OB). Glycyl lysine isopeptide (Lys-Gly) (interchain with G-Cter in ubiquitin) cross-links involve residues Lys220 and Lys244. Lys259 is subject to N6-acetyllysine; alternate. A Glycyl lysine isopeptide (Lys-Gly) (interchain with G-Cter in ubiquitin); alternate cross-link involves residue Lys259. Residues Lys267 and Lys331 each participate in a glycyl lysine isopeptide (Lys-Gly) (interchain with G-Cter in ubiquitin) cross-link. Ser384 is subject to Phosphoserine. Residues Lys410 and Lys431 each participate in a glycyl lysine isopeptide (Lys-Gly) (interchain with G-Cter in ubiquitin) cross-link. A Glycyl lysine isopeptide (Lys-Gly) (interchain with G-Cter in SUMO) cross-link involves residue Lys449. Residue Lys458 forms a Glycyl lysine isopeptide (Lys-Gly) (interchain with G-Cter in ubiquitin) linkage. A C4-type zinc finger spans residues 481 to 503 (CPTQDCNKKVIDQQNGLYRCEKC). Lys553 is covalently cross-linked (Glycyl lysine isopeptide (Lys-Gly) (interchain with G-Cter in ubiquitin)). Lys577 participates in a covalent cross-link: Glycyl lysine isopeptide (Lys-Gly) (interchain with G-Cter in SUMO).

This sequence belongs to the replication factor A protein 1 family. As to quaternary structure, component of the canonical replication protein A complex (RPA), a heterotrimer composed of RPA1, RPA2 and RPA3. The DNA-binding activity may reside exclusively on the RPA1 subunit. Interacts with PRPF19; the PRP19-CDC5L complex is recruited to the sites of DNA repair where it ubiquitinates the replication protein A complex (RPA). Interacts with RIPK1. Interacts with the polymerase alpha subunit POLA1/p180; this interaction stabilizes the replicative complex and reduces the misincorporation rate of DNA polymerase alpha by acting as a fidelity clamp. Interacts with RAD51 and SENP6 to regulate DNA repair. Interacts with HELB; this interaction promotes HELB recruitment to chromatin following DNA damage. Interacts with PRIMPOL; leading to recruit PRIMPOL on chromatin and stimulate its DNA primase activity. Interacts with XPA; the interaction is direct and associates XPA with the RPA complex. Interacts with ETAA1; the interaction is direct and promotes ETAA1 recruitment at stalled replication forks. Interacts with RPA1; this interaction associates HROB with the RPA complex. Interacts (when poly-ADP-ribosylated) with HTATSF1. Post-translationally, DNA damage-induced 'Lys-63'-linked polyubiquitination by PRPF19 mediates ATRIP recruitment to the RPA complex at sites of DNA damage and activation of ATR. Ubiquitinated by RFWD3 at stalled replication forks in response to DNA damage: ubiquitination by RFWD3 does not lead to degradation by the proteasome and promotes removal of the RPA complex from stalled replication forks, promoting homologous recombination. Sumoylated on lysine residues Lys-449 and Lys-577, with Lys-449 being the major site. Sumoylation promotes recruitment of RAD51 to the DNA damage foci to initiate DNA repair through homologous recombination. Desumoylated by SENP6. In terms of processing, poly-ADP-ribosylated by PARP1; promoting recruitment of HTATSF1.

It is found in the nucleus. It localises to the PML body. As part of the heterotrimeric replication protein A complex (RPA/RP-A), binds and stabilizes single-stranded DNA intermediates, that form during DNA replication or upon DNA stress. It prevents their reannealing and in parallel, recruits and activates different proteins and complexes involved in DNA metabolism. Thereby, it plays an essential role both in DNA replication and the cellular response to DNA damage. In the cellular response to DNA damage, the RPA complex controls DNA repair and DNA damage checkpoint activation. Through recruitment of ATRIP activates the ATR kinase a master regulator of the DNA damage response. It is required for the recruitment of the DNA double-strand break repair factors RAD51 and RAD52 to chromatin in response to DNA damage. Also recruits to sites of DNA damage proteins like XPA and XPG that are involved in nucleotide excision repair and is required for this mechanism of DNA repair. Also plays a role in base excision repair (BER) probably through interaction with UNG. Also recruits SMARCAL1/HARP, which is involved in replication fork restart, to sites of DNA damage. May also play a role in telomere maintenance. The sequence is that of Replication protein A 70 kDa DNA-binding subunit (RPA1) from Pongo abelii (Sumatran orangutan).